Reading from the N-terminus, the 140-residue chain is Nucleoside diphosphate kinase (140 aa).

ATP is bound by residues Lys-11, Phe-59, Arg-87, Thr-93, Arg-104, and Asn-114. Catalysis depends on His-117, which acts as the Pros-phosphohistidine intermediate.

The protein belongs to the NDK family. As to quaternary structure, homotetramer. Mg(2+) serves as cofactor.

Its subcellular location is the cytoplasm. It carries out the reaction a 2'-deoxyribonucleoside 5'-diphosphate + ATP = a 2'-deoxyribonucleoside 5'-triphosphate + ADP. The enzyme catalyses a ribonucleoside 5'-diphosphate + ATP = a ribonucleoside 5'-triphosphate + ADP. Its function is as follows. Major role in the synthesis of nucleoside triphosphates other than ATP. The ATP gamma phosphate is transferred to the NDP beta phosphate via a ping-pong mechanism, using a phosphorylated active-site intermediate. The protein is Nucleoside diphosphate kinase of Gluconobacter oxydans (strain 621H) (Gluconobacter suboxydans).